A 78-amino-acid chain; its full sequence is Delta-conotoxin TxVIA (78 aa).

Residues 1-22 (MKLTCMMIVAVLFLTAWTFATA) form the signal peptide. Residues 23–49 (DDPRNGLGNLFSNAHHEMKNPEASKLN) constitute a propeptide that is removed on maturation. 3 cysteine pairs are disulfide-bonded: Cys53-Cys68, Cys60-Cys72, and Cys67-Cys77. Position 59 is a methionine sulfoxide; partial (Met59).

Belongs to the conotoxin O1 superfamily. As to expression, expressed by the venom duct.

It is found in the secreted. Its function is as follows. Delta-conotoxins bind to site 6 of voltage-gated sodium channels (Nav) and inhibit the inactivation process. Binding of this toxin is strongly calcium-dependent but not voltage-dependent. The binding site is most likely on the extracellular side of the sodium channel. Binds receptor sites on both mollusk and rat central nervous system, but despite its high affinity binding to rat sodium channel, it has no functional effect in vivo and in vitro on it. Also has no effect on Gambusia fish. Is important in mollusk for the paralysis of the prey. Upon injection of the peptide, a subordinate lobster assumes an exaggerated dominant posture (of a 'King-Kong' lobster!). The chain is Delta-conotoxin TxVIA from Conus textile (Cloth-of-gold cone).